The following is an 89-amino-acid chain: Small ribosomal subunit protein uS15 (89 aa).

The protein belongs to the universal ribosomal protein uS15 family. Part of the 30S ribosomal subunit. Forms a bridge to the 50S subunit in the 70S ribosome, contacting the 23S rRNA.

Functionally, one of the primary rRNA binding proteins, it binds directly to 16S rRNA where it helps nucleate assembly of the platform of the 30S subunit by binding and bridging several RNA helices of the 16S rRNA. In terms of biological role, forms an intersubunit bridge (bridge B4) with the 23S rRNA of the 50S subunit in the ribosome. The protein is Small ribosomal subunit protein uS15 of Bifidobacterium adolescentis (strain ATCC 15703 / DSM 20083 / NCTC 11814 / E194a).